The chain runs to 248 residues: Octanoyltransferase (248 aa).

The BPL/LPL catalytic domain maps to 53–238 (ADTGDEIWVV…NLDGASAAAD (186 aa)). Substrate contacts are provided by residues 93–100 (RGGQITYH), 165–167 (ALG), and 178–180 (GLS). Residue C196 is the Acyl-thioester intermediate of the active site.

It belongs to the LipB family.

It is found in the cytoplasm. The catalysed reaction is octanoyl-[ACP] + L-lysyl-[protein] = N(6)-octanoyl-L-lysyl-[protein] + holo-[ACP] + H(+). It functions in the pathway protein modification; protein lipoylation via endogenous pathway; protein N(6)-(lipoyl)lysine from octanoyl-[acyl-carrier-protein]: step 1/2. Catalyzes the transfer of endogenously produced octanoic acid from octanoyl-acyl-carrier-protein onto the lipoyl domains of lipoate-dependent enzymes. Lipoyl-ACP can also act as a substrate although octanoyl-ACP is likely to be the physiological substrate. This is Octanoyltransferase from Burkholderia orbicola (strain MC0-3).